A 181-amino-acid polypeptide reads, in one-letter code: MKKRGKKPELDWTDDEQEEIIWVSKSEIKRDAEELKKLGARLVELSQANLDKITLAETLLDAVNLARRSVKEAKRRQLQFIGKLLRSATEDEINHIRESLDKIANKHNQQQAMLHKLEQLRDELVVGDDEVLTKFYDEYPQADRQHLRNLVRAAKKEKEQNKAPKAYREIYQYLKDLILSD.

The protein belongs to the DarP family.

It is found in the cytoplasm. Its function is as follows. Member of a network of 50S ribosomal subunit biogenesis factors which assembles along the 30S-50S interface, preventing incorrect 23S rRNA structures from forming. Promotes peptidyl transferase center (PTC) maturation. The protein is Dual-action ribosomal maturation protein DarP of Actinobacillus succinogenes (strain ATCC 55618 / DSM 22257 / CCUG 43843 / 130Z).